A 51-amino-acid chain; its full sequence is uncharacterized protein (51 aa).

The helical transmembrane segment at 10 to 29 (LFLYHPLFLLLLYIYLVLFI) threads the bilayer.

It is found in the plastid. The protein localises to the chloroplast membrane. This is an uncharacterized protein from Anthoceros angustus (Hornwort).